We begin with the raw amino-acid sequence, 465 residues long: 23S rRNA (uracil(1939)-C(5))-methyltransferase RlmD (465 aa).

The segment at 1-22 (MSEAVPTSARKSKNAPVAPGPA) is disordered. The TRAM domain maps to 16–80 (PVAPGPAPVL…PSYEQATVVD (65 aa)). [4Fe-4S] cluster-binding residues include C93, C99, C102, and C181. Residues Q289, F318, N323, E339, N367, and D388 each contribute to the S-adenosyl-L-methionine site. The Nucleophile role is filled by C421.

It belongs to the class I-like SAM-binding methyltransferase superfamily. RNA M5U methyltransferase family. RlmD subfamily.

The catalysed reaction is uridine(1939) in 23S rRNA + S-adenosyl-L-methionine = 5-methyluridine(1939) in 23S rRNA + S-adenosyl-L-homocysteine + H(+). Its function is as follows. Catalyzes the formation of 5-methyl-uridine at position 1939 (m5U1939) in 23S rRNA. This chain is 23S rRNA (uracil(1939)-C(5))-methyltransferase RlmD, found in Burkholderia cenocepacia (strain HI2424).